We begin with the raw amino-acid sequence, 302 residues long: Methionyl-tRNA formyltransferase (302 aa).

107-110 is a (6S)-5,6,7,8-tetrahydrofolate binding site; the sequence is SLLP.

Belongs to the Fmt family.

It carries out the reaction L-methionyl-tRNA(fMet) + (6R)-10-formyltetrahydrofolate = N-formyl-L-methionyl-tRNA(fMet) + (6S)-5,6,7,8-tetrahydrofolate + H(+). Its function is as follows. Attaches a formyl group to the free amino group of methionyl-tRNA(fMet). The formyl group appears to play a dual role in the initiator identity of N-formylmethionyl-tRNA by promoting its recognition by IF2 and preventing the misappropriation of this tRNA by the elongation apparatus. This Leifsonia xyli subsp. xyli (strain CTCB07) protein is Methionyl-tRNA formyltransferase.